The sequence spans 359 residues: E3 ubiquitin-protein ligase RNF146 (359 aa).

Residues C37–R75 form an RING-type zinc finger. Glycyl lysine isopeptide (Lys-Gly) (interchain with G-Cter in ubiquitin) cross-links involve residues K85 and K95. A WWE domain is found at E92 to R168. A glycoprotein contacts are provided by Y108, R111, and W115. Residue K131 forms a Glycyl lysine isopeptide (Lys-Gly) (interchain with G-Cter in ubiquitin) linkage. 4 residues coordinate a glycoprotein: Y145, Q154, R164, and K176. Residue K176 forms a Glycyl lysine isopeptide (Lys-Gly) (interchain with G-Cter in ubiquitin) linkage. The disordered stretch occupies residues G254–V359. Residues S284–D298 show a composition bias toward acidic residues. Residues S290 and S294 each carry the phosphoserine modification. Residues H306–P323 are compositionally biased toward polar residues.

Can form homooligomers. Interacts with PARsylated AXIN1, AXIN2, BLZF1, CASC3, H1-2, IPO7, LIG3, NCL, PARP1, XRCC1, XRCC5 and XRCC6. Interacts with DDB1, DHX15, IQGAP1, LRPPRC, PARP2, PRKDC, RUVBL2, TNKS1 and TNKS2. Binding often leads to interactor ubiquitination, in the presence of the appropriate E1 and E2 enzymes, and proteasomal degradation. In terms of processing, ubiquitinated; autoubiquitinated. Polyubiquitinated in the presence of UBE2D1, UBE2D2 and UBE2D3. Multimonoubiquitinated in the presence of UBE2E1. Not ubiquitinated in the presence of UBE2H, CDC34, UBE2L3, UBE2L6, nor UBE2C. In the absence of PAR, autoubiquitination occurs on Lys-85, Lys-95 and Lys-176 via 'Lys-11' and 'Lys-48' ubiquitin linkages. In the presence of PAR, Lys-131 and Lys-176 are ubiquitinated via 'Lys-6', 'Lys-33' and 'Lys-48' ubiquitin linkages. Autoubiquitination is enhanced upon PAR-binding. Ubiquitously expressed. Up-regulated in brains from patients with Alzheimer disease.

It is found in the cytoplasm. The protein resides in the cytosol. The protein localises to the nucleus. The catalysed reaction is S-ubiquitinyl-[E2 ubiquitin-conjugating enzyme]-L-cysteine + [acceptor protein]-L-lysine = [E2 ubiquitin-conjugating enzyme]-L-cysteine + N(6)-ubiquitinyl-[acceptor protein]-L-lysine.. Its pathway is protein modification; protein ubiquitination. Functionally, E3 ubiquitin-protein ligase that specifically binds poly-ADP-ribosylated (PARsylated) proteins and mediates their ubiquitination and subsequent degradation. May regulate many important biological processes, such as cell survival and DNA damage response. Acts as an activator of the Wnt signaling pathway by mediating the ubiquitination of PARsylated AXIN1 and AXIN2, 2 key components of the beta-catenin destruction complex. Acts in cooperation with tankyrase proteins (TNKS and TNKS2), which mediate PARsylation of target proteins AXIN1, AXIN2, BLZF1, CASC3, TNKS and TNKS2. Recognizes and binds tankyrase-dependent PARsylated proteins via its WWE domain and mediates their ubiquitination, leading to their degradation. Different ubiquitin linkage types have been observed: TNKS2 undergoes ubiquitination at 'Lys-48' and 'Lys-63', while AXIN1 is only ubiquitinated at 'Lys-48'. May regulate TNKS and TNKS2 subcellular location, preventing aggregation at a centrosomal location. Neuroprotective protein. Protects the brain against N-methyl-D-aspartate (NMDA) receptor-mediated glutamate excitotoxicity and ischemia, by interfering with PAR-induced cell death, called parthanatos. Prevents nuclear translocation of AIFM1 in a PAR-binding dependent manner. Does not affect PARP1 activation. Protects against cell death induced by DNA damaging agents, such as N-methyl-N-nitro-N-nitrosoguanidine (MNNG) and rescues cells from G1 arrest. Promotes cell survival after gamma-irradiation. Facilitates DNA repair. This is E3 ubiquitin-protein ligase RNF146 (RNF146) from Homo sapiens (Human).